Here is a 516-residue protein sequence, read N- to C-terminus: GMP synthase [glutamine-hydrolyzing] (516 aa).

The 191-residue stretch at 8 to 198 (KILILDFGSQ…VVNICGCDTL (191 aa)) folds into the Glutamine amidotransferase type-1 domain. Catalysis depends on cysteine 84, which acts as the Nucleophile. Active-site residues include histidine 172 and glutamate 174. One can recognise a GMPS ATP-PPase domain in the interval 199–391 (WNIENIIEND…LGLPYNMLYR (193 aa)). 226-232 (SGGVDSS) provides a ligand contact to ATP.

As to quaternary structure, homodimer.

It carries out the reaction XMP + L-glutamine + ATP + H2O = GMP + L-glutamate + AMP + diphosphate + 2 H(+). The protein operates within purine metabolism; GMP biosynthesis; GMP from XMP (L-Gln route): step 1/1. In terms of biological role, catalyzes the synthesis of GMP from XMP. The chain is GMP synthase [glutamine-hydrolyzing] from Francisella tularensis subsp. holarctica (strain LVS).